The chain runs to 300 residues: Ribonuclease HIII (300 aa).

Residues 86–300 (RPRLGVDESG…FNEICDSASA (215 aa)) enclose the RNase H type-2 domain. Aspartate 92, glutamate 93, and aspartate 196 together coordinate a divalent metal cation.

It belongs to the RNase HII family. RnhC subfamily. Mn(2+) serves as cofactor. It depends on Mg(2+) as a cofactor.

It localises to the cytoplasm. It catalyses the reaction Endonucleolytic cleavage to 5'-phosphomonoester.. Endonuclease that specifically degrades the RNA of RNA-DNA hybrids. This is Ribonuclease HIII from Chlamydia caviae (strain ATCC VR-813 / DSM 19441 / 03DC25 / GPIC) (Chlamydophila caviae).